A 571-amino-acid chain; its full sequence is S100P-binding protein (571 aa).

Residues 270–280 (SDIPFDGDIDE) are compositionally biased toward acidic residues. Disordered regions lie at residues 270–312 (SDIP…LESV) and 356–385 (NGQNNSNKVPLPPSDTAPGPQLPADPCSQS). The segment covering 299–309 (TSESTPASSEL) has biased composition (polar residues). Over residues 365–378 (PLPPSDTAPGPQLP) the composition is skewed to pro residues.

The protein resides in the nucleus. This is S100P-binding protein (s100pbp) from Xenopus tropicalis (Western clawed frog).